A 924-amino-acid chain; its full sequence is Hexokinase-3 (924 aa).

The tract at residues 1–27 is disordered; that stretch reads MAAIEPSGLHPGERDSSCPQEGIPRPS. Hexokinase domains are found at residues 27 to 471 and 477 to 913; these read SGSL…MVTA and ATHR…LVTR. Residues 84–220 form a hexokinase small subdomain 1 region; sequence HGTEQGDFLV…TYNIDVVAMV (137 aa). 95 to 102 serves as a coordination point for ATP; it reads ELGATGAS. D-glucose 6-phosphate is bound at residue 95-104; the sequence is ELGATGASLR. Residues Ser-168, 185–186, and 221–222 contribute to the D-glucose site; these read TK and ND. Residues 221–460 are hexokinase large subdomain 1; the sequence is NDTVGTMMGC…CDVSFIPSVD (240 aa). Positions 222 and 245 each coordinate D-glucose 6-phosphate. D-glucose is bound by residues Asn-248, Glu-273, and 304-307; that span reads QRFE. 426 to 428 contacts D-glucose 6-phosphate; sequence GGR. ATP contacts are provided by residues 438–439 and 542–547; these read CI and DLGGTN. A hexokinase small subdomain 2 region spans residues 531 to 662; it reads DGSERGDFLA…AVELNVVAIV (132 aa). Residue 542-546 participates in D-glucose 6-phosphate binding; that stretch reads DLGGT. D-glucose-binding positions include 610–611, 627–628, and 663–664; these read SF, TK, and ND. The interval 663-902 is hexokinase large subdomain 2; that stretch reads NDTVGTMMSC…CTVTFLQSED (240 aa). Positions 664 and 687 each coordinate D-glucose 6-phosphate. Thr-687 lines the ATP pocket. D-glucose contacts are provided by residues 689–690, Glu-715, and Glu-749; that span reads TN. ATP-binding positions include 754–755, 791–795, and 870–874; these read GM, TKFLS, and TLYKL. D-glucose 6-phosphate is bound by residues 868-870 and Ser-904; that span reads DGT.

It belongs to the hexokinase family.

The catalysed reaction is a D-hexose + ATP = a D-hexose 6-phosphate + ADP + H(+). The enzyme catalyses D-fructose + ATP = D-fructose 6-phosphate + ADP + H(+). It catalyses the reaction D-glucose + ATP = D-glucose 6-phosphate + ADP + H(+). It participates in carbohydrate metabolism; hexose metabolism. It functions in the pathway carbohydrate degradation; glycolysis; D-glyceraldehyde 3-phosphate and glycerone phosphate from D-glucose: step 1/4. Its activity is regulated as follows. Hexokinase is an allosteric enzyme inhibited by its product D-glucose 6-phosphate. Catalyzes the phosphorylation of hexose, such as D-glucose and D-fructose, to hexose 6-phosphate (D-glucose 6-phosphate and D-fructose 6-phosphate, respectively). Mediates the initial step of glycolysis by catalyzing phosphorylation of D-glucose to D-glucose 6-phosphate. The polypeptide is Hexokinase-3 (Rattus norvegicus (Rat)).